Here is an 851-residue protein sequence, read N- to C-terminus: Putative mediator of RNA polymerase II transcription subunit 15 (851 aa).

2 disordered regions span residues 79–212 (AQAG…NTVY) and 299–368 (QQQQ…NNTH). The segment covering 98 to 141 (ITPLIQQPITPVQQQVPPQKQPQPVYNQQQNQQQNQNQYTTTYP) has biased composition (low complexity). Polar residues predominate over residues 145–154 (TPQQSNTPPI). The segment covering 155-212 (SNNNSNNNSNNNLNNNNNNNINNNNNNNNNNNNNNNNNNNNNNNNNNNNNNNNNNTVY) has biased composition (low complexity). The stretch at 231–307 (QLYLQQQQQL…QQQQQQQHQQ (77 aa)) forms a coiled coil. The span at 308–319 (PVQMPSGVTTNK) shows a compositional bias: polar residues. The segment covering 320 to 358 (QSPQPQNTPLTPQQQQQLLAAQQSHAQAQANQNQQLQNP) has biased composition (low complexity). A compositionally biased stretch (polar residues) spans 359 to 368 (KRISSTNNTH). Residues 790-827 (LKDLESKMNKEFENSNDLNQLNNNINNNNNNNNSFSDN) are a coiled coil.

It belongs to the Mediator complex subunit 15 family. Component of the Mediator complex.

It localises to the cytoplasm. The protein localises to the nucleus. Its function is as follows. Component of the Mediator complex, a coactivator involved in the regulated transcription of nearly all RNA polymerase II-dependent genes. Mediator functions as a bridge to convey information from gene-specific regulatory proteins to the basal RNA polymerase II transcription machinery. Mediator is recruited to promoters by direct interactions with regulatory proteins and serves as a scaffold for the assembly of a functional preinitiation complex with RNA polymerase II and the general transcription factors. This chain is Putative mediator of RNA polymerase II transcription subunit 15 (med15), found in Dictyostelium discoideum (Social amoeba).